The chain runs to 529 residues: Bifunctional purine biosynthesis protein PurH (529 aa).

One can recognise an MGS-like domain in the interval 1–148 (MQPPRPVRRA…KNHKDVAIVV (148 aa)).

The protein belongs to the PurH family.

It catalyses the reaction (6R)-10-formyltetrahydrofolate + 5-amino-1-(5-phospho-beta-D-ribosyl)imidazole-4-carboxamide = 5-formamido-1-(5-phospho-D-ribosyl)imidazole-4-carboxamide + (6S)-5,6,7,8-tetrahydrofolate. It carries out the reaction IMP + H2O = 5-formamido-1-(5-phospho-D-ribosyl)imidazole-4-carboxamide. It participates in purine metabolism; IMP biosynthesis via de novo pathway; 5-formamido-1-(5-phospho-D-ribosyl)imidazole-4-carboxamide from 5-amino-1-(5-phospho-D-ribosyl)imidazole-4-carboxamide (10-formyl THF route): step 1/1. It functions in the pathway purine metabolism; IMP biosynthesis via de novo pathway; IMP from 5-formamido-1-(5-phospho-D-ribosyl)imidazole-4-carboxamide: step 1/1. The polypeptide is Bifunctional purine biosynthesis protein PurH (Sodalis glossinidius (strain morsitans)).